The following is a 52-amino-acid chain: Large ribosomal subunit protein bL32c (52 aa).

This sequence belongs to the bacterial ribosomal protein bL32 family.

It is found in the plastid. The protein resides in the chloroplast. The protein is Large ribosomal subunit protein bL32c of Citrus sinensis (Sweet orange).